We begin with the raw amino-acid sequence, 338 residues long: Ketol-acid reductoisomerase (NADP(+)) (338 aa).

The KARI N-terminal Rossmann domain occupies 1 to 181 (MQVYYDKDCD…GGGRTGIIET (181 aa)). NADP(+)-binding positions include 24-27 (FGSQ), R47, S50, S52, and 82-85 (DEFQ). Residue H107 is part of the active site. Residue G133 coordinates NADP(+). A KARI C-terminal knotted domain is found at 182 to 327 (TFKDETETDL…EKLRSMMPWI (146 aa)). 4 residues coordinate Mg(2+): D190, E194, E226, and E230. S251 lines the substrate pocket.

This sequence belongs to the ketol-acid reductoisomerase family. The cofactor is Mg(2+).

It carries out the reaction (2R)-2,3-dihydroxy-3-methylbutanoate + NADP(+) = (2S)-2-acetolactate + NADPH + H(+). The enzyme catalyses (2R,3R)-2,3-dihydroxy-3-methylpentanoate + NADP(+) = (S)-2-ethyl-2-hydroxy-3-oxobutanoate + NADPH + H(+). Its pathway is amino-acid biosynthesis; L-isoleucine biosynthesis; L-isoleucine from 2-oxobutanoate: step 2/4. The protein operates within amino-acid biosynthesis; L-valine biosynthesis; L-valine from pyruvate: step 2/4. Involved in the biosynthesis of branched-chain amino acids (BCAA). Catalyzes an alkyl-migration followed by a ketol-acid reduction of (S)-2-acetolactate (S2AL) to yield (R)-2,3-dihydroxy-isovalerate. In the isomerase reaction, S2AL is rearranged via a Mg-dependent methyl migration to produce 3-hydroxy-3-methyl-2-ketobutyrate (HMKB). In the reductase reaction, this 2-ketoacid undergoes a metal-dependent reduction by NADPH to yield (R)-2,3-dihydroxy-isovalerate. This Marinobacter nauticus (strain ATCC 700491 / DSM 11845 / VT8) (Marinobacter aquaeolei) protein is Ketol-acid reductoisomerase (NADP(+)).